The following is a 275-amino-acid chain: 3-methyl-2-oxobutanoate hydroxymethyltransferase (275 aa).

Residues aspartate 55 and aspartate 94 each coordinate Mg(2+). 3-methyl-2-oxobutanoate is bound by residues 55–56 (DS), aspartate 94, and lysine 122. Glutamate 124 lines the Mg(2+) pocket. The Proton acceptor role is filled by glutamate 191.

Belongs to the PanB family. As to quaternary structure, homodecamer; pentamer of dimers. Mg(2+) serves as cofactor.

The protein localises to the cytoplasm. The catalysed reaction is 3-methyl-2-oxobutanoate + (6R)-5,10-methylene-5,6,7,8-tetrahydrofolate + H2O = 2-dehydropantoate + (6S)-5,6,7,8-tetrahydrofolate. It participates in cofactor biosynthesis; (R)-pantothenate biosynthesis; (R)-pantoate from 3-methyl-2-oxobutanoate: step 1/2. Functionally, catalyzes the reversible reaction in which hydroxymethyl group from 5,10-methylenetetrahydrofolate is transferred onto alpha-ketoisovalerate to form ketopantoate. In Marinomonas sp. (strain MWYL1), this protein is 3-methyl-2-oxobutanoate hydroxymethyltransferase.